The sequence spans 209 residues: Ribonuclease HII (209 aa).

In terms of domain architecture, RNase H type-2 spans 18 to 209; sequence GLVAGVDEVG…FKPVKALLER (192 aa). Asp-24, Glu-25, and Asp-116 together coordinate a divalent metal cation.

Belongs to the RNase HII family. Requires Mn(2+) as cofactor. Mg(2+) is required as a cofactor.

It localises to the cytoplasm. It carries out the reaction Endonucleolytic cleavage to 5'-phosphomonoester.. Endonuclease that specifically degrades the RNA of RNA-DNA hybrids. This is Ribonuclease HII from Shewanella sp. (strain ANA-3).